A 302-amino-acid chain; its full sequence is RESGCSFVLALMQKHRRRERRFGRDMETIGFAVYEVPRELVGQPALHLKRDFFLANASRARSEQFINLREVSTRFRLPPGEYVVVPSTFEPNKEGDFVLRFFSEKRAGTQELDDQIQANLPDEQVLSAEEIDENFKALFRQLAGEDLEISVRELQTILNRITSKHKDLRTKGFSMESCRSMVNLMDRDGNGKLGLVEFNILWNRIRNYLAIFRKFDLDKSGSMSAYEMRMAIESAGFKLNKKLYELIITRYSEPDLAVDFDNFVCCLVRLETMFRFFKTLDTDLDGVVTFDLFKWLQLTMFA.

A domain III region spans residues 1 to 114 (RESGCSFVLA…KRAGTQELDD (114 aa)). The tract at residues 115–130 (QIQANLPDEQVLSAEE) is linker. The tract at residues 131-301 (IDENFKALFR…LFKWLQLTMF (171 aa)) is domain IV. 3 EF-hand domains span residues 173-206 (FSME…NRIR), 203-238 (NRIR…AGFK), and 268-302 (VRLE…TMFA). Ca(2+) contacts are provided by aspartate 186, aspartate 188, asparagine 190, lysine 192, glutamate 197, aspartate 216, aspartate 218, serine 220, serine 222, and glutamate 227.

The protein belongs to the peptidase C2 family. Forms a heterodimer with a small (regulatory) subunit CAPNS1. The cofactor is Ca(2+). In terms of processing, the N-terminus is blocked. Post-translationally, undergoes calcium-induced successive autoproteolytic cleavages that generate a membrane-bound 78 kDa active form and an intracellular 75 kDa active form. Calpastatin reduces with high efficiency the transition from 78 kDa to 75 kDa calpain forms. Ubiquitous.

Its subcellular location is the cytoplasm. The protein resides in the cell membrane. The catalysed reaction is Broad endopeptidase specificity.. Activated by micromolar concentrations of calcium and inhibited by calpastatin. In terms of biological role, calcium-regulated non-lysosomal thiol-protease which catalyzes limited proteolysis of substrates involved in cytoskeletal remodeling and signal transduction. Proteolytically cleaves CTBP1. Cleaves and activates caspase-7 (CASP7). The polypeptide is Calpain-1 catalytic subunit (Oryctolagus cuniculus (Rabbit)).